The following is a 670-amino-acid chain: DNA ligase (670 aa).

NAD(+) is bound by residues 33 to 37 (DAEYD), 82 to 83 (SL), and Glu114. The active-site N6-AMP-lysine intermediate is Lys116. Positions 137, 174, 291, and 315 each coordinate NAD(+). Positions 409, 412, 427, and 433 each coordinate Zn(2+). Residues 593 to 670 (GVELPLEGKT…TEQDLLNLMK (78 aa)) form the BRCT domain.

This sequence belongs to the NAD-dependent DNA ligase family. LigA subfamily. Requires Mg(2+) as cofactor. The cofactor is Mn(2+).

It catalyses the reaction NAD(+) + (deoxyribonucleotide)n-3'-hydroxyl + 5'-phospho-(deoxyribonucleotide)m = (deoxyribonucleotide)n+m + AMP + beta-nicotinamide D-nucleotide.. Its function is as follows. DNA ligase that catalyzes the formation of phosphodiester linkages between 5'-phosphoryl and 3'-hydroxyl groups in double-stranded DNA using NAD as a coenzyme and as the energy source for the reaction. It is essential for DNA replication and repair of damaged DNA. This chain is DNA ligase, found in Vibrio campbellii (strain ATCC BAA-1116).